The sequence spans 490 residues: O-acetyltransferase PaAT-2 (490 aa).

The active-site Proton acceptor is the His-165.

The protein belongs to the plant acyltransferase family.

Its pathway is mycotoxin biosynthesis. In terms of biological role, O-acetyltransferase; part of the 2 gene clusters that mediate the biosynthesis of fusicoccins, diterpene glucosides that display phytohormone-like activity and function as potent activators of plasma membrane H(+)-ATPases in plants by modifying 14-3-3 proteins and cause the plant disease constriction canker. The first step in the pathway is performed by the fusicoccadiene synthase PaFS that possesses both prenyl transferase and terpene cyclase activity, converting isopentenyl diphosphate and dimethylallyl diphosphate into geranylgeranyl diphosphate (GGDP) and successively converting GGDP into fusicocca-2,10(14)-diene, a precursor for fusicoccin H. The second step is the oxidation at the C-8 position by the cytochrome P450 monooxygenase PaP450-2 to yield fusicocca-2,10(14)-diene-8-beta-ol. The cytochrome P450 monooxygenase PaP450-1 then catalyzes the hydroxylation at the C-16 position to produce fusicocca-2,10(14)-diene-8-beta,16-diol. The dioxygenase fc-dox then catalyzes the 16-oxydation of fusicocca-2,10(14)-diene-8-beta,16-diol to yield an aldehyde (8-beta-hydroxyfusicocca-1,10(14)-dien-16-al). The short-chain dehydrogenase/reductase fc-sdr catalyzes the reduction of the aldehyde to yield fusicocca-1,10(14)-diene-8-beta,16-diol. The next step is the hydroxylation at C-9 performed by the cytochrome P450 monooxygenase PaP450-3 that leads to fusicoccin H aglycon which is glycosylated to fusicoccin H by the O-glycosyltransferase PaGT. Hydroxylation at C-12 by the cytochrome P450 monooxygenase PaP450-4 leads then to the production of fusicoccin Q and is followed by methylation by the O-methyltransferase PaMT to yield fusicoccin P. Fusicoccin P is further converted to fusicoccin J via prenylation by the O-glucose prenyltransferase PaPT. Cytochrome P450 monooxygenase PaP450-5 then performs hydroxylation at C-19 to yield dideacetyl-fusicoccin A which is acetylated to 3'-O-deacetyl-fusicoccin A by the O-acetyltransferase PaAT-2. Finally, a another acetylation by the O-acetyltransferase PaAT-1 yields fusicoccin A. The polypeptide is O-acetyltransferase PaAT-2 (Phomopsis amygdali (Fusicoccum amygdali)).